Here is a 122-residue protein sequence, read N- to C-terminus: Large ribosomal subunit protein uL14 (122 aa).

This sequence belongs to the universal ribosomal protein uL14 family. As to quaternary structure, part of the 50S ribosomal subunit. Forms a cluster with proteins L3 and L19. In the 70S ribosome, L14 and L19 interact and together make contacts with the 16S rRNA in bridges B5 and B8.

In terms of biological role, binds to 23S rRNA. Forms part of two intersubunit bridges in the 70S ribosome. The polypeptide is Large ribosomal subunit protein uL14 (Methylobacterium radiotolerans (strain ATCC 27329 / DSM 1819 / JCM 2831 / NBRC 15690 / NCIMB 10815 / 0-1)).